A 103-amino-acid polypeptide reads, in one-letter code: Small ribosomal subunit protein uS10 (103 aa).

The protein belongs to the universal ribosomal protein uS10 family. Part of the 30S ribosomal subunit.

Its function is as follows. Involved in the binding of tRNA to the ribosomes. The sequence is that of Small ribosomal subunit protein uS10 from Magnetococcus marinus (strain ATCC BAA-1437 / JCM 17883 / MC-1).